The following is a 634-amino-acid chain: BTB/POZ domain-containing protein At1g03010 (634 aa).

In terms of domain architecture, BTB spans 38–103 (SDLTVQVGSS…CYGINIEINL (66 aa)). Residues 205 to 503 (DWWGKSLAVL…VQVLYFEQIR (299 aa)) form the NPH3 domain. Tyr-444 bears the Phosphotyrosine mark. Positions 542–580 (RDNYASVRRENRELKLEVARMRMRLTDLEKDHISIKQEL) form a coiled coil.

This sequence belongs to the NPH3 family.

Its pathway is protein modification; protein ubiquitination. May act as a substrate-specific adapter of an E3 ubiquitin-protein ligase complex (CUL3-RBX1-BTB) which mediates the ubiquitination and subsequent proteasomal degradation of target proteins. In Arabidopsis thaliana (Mouse-ear cress), this protein is BTB/POZ domain-containing protein At1g03010.